A 134-amino-acid polypeptide reads, in one-letter code: Small ribosomal subunit protein uS8c (134 aa).

This sequence belongs to the universal ribosomal protein uS8 family. In terms of assembly, part of the 30S ribosomal subunit.

It is found in the plastid. Its subcellular location is the chloroplast. One of the primary rRNA binding proteins, it binds directly to 16S rRNA central domain where it helps coordinate assembly of the platform of the 30S subunit. In Daucus carota (Wild carrot), this protein is Small ribosomal subunit protein uS8c (rps8).